Reading from the N-terminus, the 347-residue chain is Integrin beta-1-binding protein 2 (347 aa).

Zn(2+) contacts are provided by Cys-5, Cys-10, Cys-24, and His-27. A CHORD 1 domain is found at 5–64; the sequence is CRNKGCGQHFDPNTNLPDSCCHHPGVPIFHDALKGWSCCRKRTVDFSEFLNIKGCTMGPH. Residues 28 to 31 carry the SH3-binding motif; that stretch reads PGVP. Zn(2+) is bound by residues Cys-42, Cys-43, Cys-59, and His-64. Positions 70-78 match the SH3-binding motif; the sequence is PEAPQPEGP. Zn(2+)-binding residues include Cys-149 and Cys-154. The region spanning 149–208 is the CHORD 2 domain; that stretch reads CQNPGCDAVYQGPESDATPCTYHPGAPRFHEGMKSWSCCGIQTLDFGAFLAQPGCRVGRH. The SH2-binding motif lies at 158-161; the sequence is YQGP. Positions 168 and 171 each coordinate Zn(2+). The short motif at 172–175 is the SH3-binding element; the sequence is PGAP. Zn(2+)-binding residues include Cys-186, Cys-187, Cys-203, and His-208. A CS domain is found at 215-304; it reads PASCRHDWHQ…ADPGSWAQLE (90 aa). The SH2-binding signature appears at 234–237; it reads YGQI. The disordered stretch occupies residues 319–347; the sequence is LEMDEEESDDSDDDLSWTEEEEEEEAMGE. Residues 320-347 are compositionally biased toward acidic residues; that stretch reads EMDEEESDDSDDDLSWTEEEEEEEAMGE.

As to quaternary structure, interacts with beta-1 integrin subunit. This interaction is regulated by divalent cations, and it occurs only in absence of calcium. As to expression, expressed in skeletal and cardiac muscles but not in other tissues.

Its function is as follows. May play a role during maturation and/or organization of muscles cells. The protein is Integrin beta-1-binding protein 2 (ITGB1BP2) of Homo sapiens (Human).